The following is a 146-amino-acid chain: Hemoglobin subunit beta-1 (146 aa).

A Globin domain is found at 2-146 (KWSDKERAVI…VVSALGKQYC (145 aa)). Heme b contacts are provided by His-63 and His-92.

The protein belongs to the globin family. As to quaternary structure, hb1 is a heterotetramer of two alpha-1 chains and two beta-1 chains; Hb2 is a heterotetramer of two alpha-2 chains and two beta-1 chains. In terms of tissue distribution, red blood cells.

Functionally, involved in oxygen transport from gills to the various peripheral tissues. The protein is Hemoglobin subunit beta-1 (hbb1) of Anarhichas minor (Arctic spotted wolffish).